A 344-amino-acid polypeptide reads, in one-letter code: N-acetyl-gamma-glutamyl-phosphate reductase (344 aa).

Cysteine 149 is an active-site residue.

Belongs to the NAGSA dehydrogenase family. Type 1 subfamily.

Its subcellular location is the cytoplasm. It catalyses the reaction N-acetyl-L-glutamate 5-semialdehyde + phosphate + NADP(+) = N-acetyl-L-glutamyl 5-phosphate + NADPH + H(+). The protein operates within amino-acid biosynthesis; L-arginine biosynthesis; N(2)-acetyl-L-ornithine from L-glutamate: step 3/4. Functionally, catalyzes the NADPH-dependent reduction of N-acetyl-5-glutamyl phosphate to yield N-acetyl-L-glutamate 5-semialdehyde. The protein is N-acetyl-gamma-glutamyl-phosphate reductase of Thermoanaerobacter sp. (strain X514).